A 239-amino-acid chain; its full sequence is Ribonuclease HII (239 aa).

Residues 18–231 (KIIVGLDEAG…SKNLLKEIEE (214 aa)) form the RNase H type-2 domain. 3 residues coordinate a divalent metal cation: aspartate 24, glutamate 25, and aspartate 125.

Belongs to the RNase HII family. Mn(2+) serves as cofactor. Requires Mg(2+) as cofactor.

It localises to the cytoplasm. It catalyses the reaction Endonucleolytic cleavage to 5'-phosphomonoester.. Functionally, endonuclease that specifically degrades the RNA of RNA-DNA hybrids. The sequence is that of Ribonuclease HII from Methanococcus maripaludis (strain C5 / ATCC BAA-1333).